The primary structure comprises 346 residues: Holliday junction branch migration complex subunit RuvB (346 aa).

The segment at 1–182 (MSEAARLIAP…FGIPVRLNFY (182 aa)) is large ATPase domain (RuvB-L). Residues leucine 21, arginine 22, glycine 63, lysine 66, threonine 67, threonine 68, 129–131 (EDF), arginine 172, tyrosine 182, and arginine 219 each bind ATP. Threonine 67 is a Mg(2+) binding site. Residues 183–253 (TVEELELIVR…IADEALTRLL (71 aa)) form a small ATPAse domain (RuvB-S) region. The head domain (RuvB-H) stretch occupies residues 256 to 346 (SMGLDQLDRR…SQFRLTLEDD (91 aa)). 3 residues coordinate DNA: arginine 292, arginine 311, and arginine 316.

The protein belongs to the RuvB family. As to quaternary structure, homohexamer. Forms an RuvA(8)-RuvB(12)-Holliday junction (HJ) complex. HJ DNA is sandwiched between 2 RuvA tetramers; dsDNA enters through RuvA and exits via RuvB. An RuvB hexamer assembles on each DNA strand where it exits the tetramer. Each RuvB hexamer is contacted by two RuvA subunits (via domain III) on 2 adjacent RuvB subunits; this complex drives branch migration. In the full resolvosome a probable DNA-RuvA(4)-RuvB(12)-RuvC(2) complex forms which resolves the HJ.

The protein localises to the cytoplasm. It catalyses the reaction ATP + H2O = ADP + phosphate + H(+). Its function is as follows. The RuvA-RuvB-RuvC complex processes Holliday junction (HJ) DNA during genetic recombination and DNA repair, while the RuvA-RuvB complex plays an important role in the rescue of blocked DNA replication forks via replication fork reversal (RFR). RuvA specifically binds to HJ cruciform DNA, conferring on it an open structure. The RuvB hexamer acts as an ATP-dependent pump, pulling dsDNA into and through the RuvAB complex. RuvB forms 2 homohexamers on either side of HJ DNA bound by 1 or 2 RuvA tetramers; 4 subunits per hexamer contact DNA at a time. Coordinated motions by a converter formed by DNA-disengaged RuvB subunits stimulates ATP hydrolysis and nucleotide exchange. Immobilization of the converter enables RuvB to convert the ATP-contained energy into a lever motion, pulling 2 nucleotides of DNA out of the RuvA tetramer per ATP hydrolyzed, thus driving DNA branch migration. The RuvB motors rotate together with the DNA substrate, which together with the progressing nucleotide cycle form the mechanistic basis for DNA recombination by continuous HJ branch migration. Branch migration allows RuvC to scan DNA until it finds its consensus sequence, where it cleaves and resolves cruciform DNA. This Sinorhizobium medicae (strain WSM419) (Ensifer medicae) protein is Holliday junction branch migration complex subunit RuvB.